We begin with the raw amino-acid sequence, 118 residues long: MICOS complex subunit MIC13 (118 aa).

Over 1–7 (MVARVWS) the chain is Mitochondrial matrix. The chain crosses the membrane as a helical span at residues 8 to 26 (LMRFLIKGSVAGGAVYLVY). Over 27–118 (DQELLGPSDK…GWEYVKARTK (92 aa)) the chain is Mitochondrial intermembrane.

It belongs to the MICOS complex subunit Mic13 family. Component of the mitochondrial contact site and cristae organizing system (MICOS) complex, composed of at least MICOS10/MIC10, CHCHD3/MIC19, CHCHD6/MIC25, APOO/MIC26, MICOS13/MIC13, APOOL/MIC27 and IMMT/MIC60. The complex associates with mitochondrial outer membrane proteins SAMM50, MTX1 and MTX2, and with HSPA9.

The protein localises to the mitochondrion inner membrane. Its function is as follows. Component of the MICOS complex, a large protein complex of the mitochondrial inner membrane that plays crucial roles in the maintenance of crista junctions, inner membrane architecture, and formation of contact sites to the outer membrane. Constituent of mature MICOS complex, it is required for the formation of cristae junction (CJ) and maintenance of cristae morphology. Required for the incorporation of MICOS10/MIC10 into the MICOS complex. This Macaca fascicularis (Crab-eating macaque) protein is MICOS complex subunit MIC13.